Reading from the N-terminus, the 195-residue chain is Endoribonuclease YbeY (195 aa).

3 residues coordinate Zn(2+): His-152, His-156, and His-162.

The protein belongs to the endoribonuclease YbeY family. Zn(2+) is required as a cofactor.

Its subcellular location is the cytoplasm. Its function is as follows. Single strand-specific metallo-endoribonuclease involved in late-stage 70S ribosome quality control and in maturation of the 3' terminus of the 16S rRNA. This chain is Endoribonuclease YbeY, found in Rhodopseudomonas palustris (strain HaA2).